Here is a 701-residue protein sequence, read N- to C-terminus: Cytosolic endo-beta-N-acetylglucosaminidase 2 (701 aa).

Belongs to the glycosyl hydrolase 85 family.

The protein localises to the cytoplasm. It is found in the cytosol. It catalyses the reaction an N(4)-(oligosaccharide-(1-&gt;3)-[oligosaccharide-(1-&gt;6)]-beta-D-Man-(1-&gt;4)-beta-D-GlcNAc-(1-&gt;4)-alpha-D-GlcNAc)-L-asparaginyl-[protein] + H2O = an oligosaccharide-(1-&gt;3)-[oligosaccharide-(1-&gt;6)]-beta-D-Man-(1-&gt;4)-D-GlcNAc + N(4)-(N-acetyl-beta-D-glucosaminyl)-L-asparaginyl-[protein]. In terms of biological role, endoglycosidase that releases N-glycans from glycoproteins by cleaving the beta-1,4-glycosidic bond in the N,N'-diacetylchitobiose core. Involved in the production of high-mannose type N-glycans during plant development and fruit maturation. The polypeptide is Cytosolic endo-beta-N-acetylglucosaminidase 2 (Arabidopsis thaliana (Mouse-ear cress)).